A 94-amino-acid chain; its full sequence is Putative pterin-4-alpha-carbinolamine dehydratase (94 aa).

It belongs to the pterin-4-alpha-carbinolamine dehydratase family.

It catalyses the reaction (4aS,6R)-4a-hydroxy-L-erythro-5,6,7,8-tetrahydrobiopterin = (6R)-L-erythro-6,7-dihydrobiopterin + H2O. This Chloroflexus aggregans (strain MD-66 / DSM 9485) protein is Putative pterin-4-alpha-carbinolamine dehydratase.